Reading from the N-terminus, the 426-residue chain is MSKTIIEFKNVSKTYADTDTTVLKDISFELEEGKFYTLLGASGSGKSTILNIIAGLLDATDGDVILDDKRINDLPANKRNVHTIFQSYALFPNMNVFDNVAFALKIKGVDKKEIAKRVSESLKLVRLDGFEKRSITKLSGGQKQRVAIARAIIDRPKVLLLDESLSALDMKLRKDMQYELRELQQSLGITFIFVTHDQEEALAMSDWVFIMNEGEIVQSGTPTDIYDEPINHFVADFIGESNILNGKMIEDYLVEFNGQKFEAVDGGMRKNEPIEVVIRPEDIWFTLPNEGKFNVKVDTQLFRGVHYEIVAYDEFNNEWIIHSTHKAIVGETVGLDFDPEAIHIMRLNESEEEFDARIEEYVEEEETVGLAKAVEEENAEEEAAIQEAVKEALENTMELTELAETVNEILQKQENETENSESGDHK.

In terms of domain architecture, ABC transporter spans Ile-6–Ile-238. Gly-40–Ser-47 serves as a coordination point for ATP.

The protein belongs to the ABC transporter superfamily. Spermidine/putrescine importer (TC 3.A.1.11.1) family. As to quaternary structure, the complex is composed of two ATP-binding proteins (PotA), two transmembrane proteins (PotB and PotC) and a solute-binding protein (PotD).

Its subcellular location is the cell membrane. The enzyme catalyses ATP + H2O + polyamine-[polyamine-binding protein]Side 1 = ADP + phosphate + polyamineSide 2 + [polyamine-binding protein]Side 1.. Functionally, part of the ABC transporter complex PotABCD involved in spermidine/putrescine import. Responsible for energy coupling to the transport system. This Lactococcus lactis subsp. cremoris (strain SK11) protein is Spermidine/putrescine import ATP-binding protein PotA.